The chain runs to 105 residues: uncharacterized protein (105 aa).

Residues 13 to 35 traverse the membrane as a helical segment; it reads LLFAFVVVIVVLTLSYVYAQNII.

Its subcellular location is the membrane. This is an uncharacterized protein from Archaeoglobus fulgidus (strain ATCC 49558 / DSM 4304 / JCM 9628 / NBRC 100126 / VC-16).